The chain runs to 572 residues: Phosphoenolpyruvate-protein phosphotransferase (572 aa).

The active-site Tele-phosphohistidine intermediate is His190. Phosphoenolpyruvate is bound by residues Arg297 and Arg333. Positions 432 and 456 each coordinate Mg(2+). Residues 455-456 and Arg466 each bind phosphoenolpyruvate; that span reads ND. Residue Cys503 is the Proton donor of the active site.

The protein belongs to the PEP-utilizing enzyme family. Homodimer. Mg(2+) is required as a cofactor.

It is found in the cytoplasm. It catalyses the reaction L-histidyl-[protein] + phosphoenolpyruvate = N(pros)-phospho-L-histidyl-[protein] + pyruvate. In terms of biological role, general (non sugar-specific) component of the phosphoenolpyruvate-dependent sugar phosphotransferase system (sugar PTS). This major carbohydrate active-transport system catalyzes the phosphorylation of incoming sugar substrates concomitantly with their translocation across the cell membrane. Enzyme I transfers the phosphoryl group from phosphoenolpyruvate (PEP) to the phosphoryl carrier protein (HPr). The chain is Phosphoenolpyruvate-protein phosphotransferase (ptsI) from Listeria monocytogenes serovar 1/2a (strain ATCC BAA-679 / EGD-e).